We begin with the raw amino-acid sequence, 192 residues long: MPENSRIVLASASPRRLELLASAGIEFDVFASDIPEEPIPGEAPADFSVRLAKDKAVATAARSEGRWFIGADTIVVCDGEIMGKPADGADAVRMLKKLSGVPHEVITGYAIYDKARDGILCKAVVTKVFFKPLRDEEITAYVATGCPMDKAGAYAIQGGAACMVERIDGSYTNVVGLPLCEVVEDLRTMGAL.

Asp72 (proton acceptor) is an active-site residue.

Belongs to the Maf family. YhdE subfamily. The cofactor is a divalent metal cation.

It localises to the cytoplasm. It carries out the reaction dTTP + H2O = dTMP + diphosphate + H(+). It catalyses the reaction UTP + H2O = UMP + diphosphate + H(+). In terms of biological role, nucleoside triphosphate pyrophosphatase that hydrolyzes dTTP and UTP. May have a dual role in cell division arrest and in preventing the incorporation of modified nucleotides into cellular nucleic acids. This chain is dTTP/UTP pyrophosphatase, found in Geobacter metallireducens (strain ATCC 53774 / DSM 7210 / GS-15).